Here is a 497-residue protein sequence, read N- to C-terminus: Replication factor C large subunit (497 aa).

50–57 provides a ligand contact to ATP; that stretch reads GPAGVGKT. A compositionally biased stretch (basic and acidic residues) spans 428-455; it reads KRRSLGRDEGKAFFEKKPKKQTPDKKQM. Residues 428–497 form a disordered region; that stretch reads KRRSLGRDEG…AKPQKTLFDF (70 aa). A compositionally biased stretch (polar residues) spans 456–465; sequence DLTQIINSTP. Residues 466–476 are compositionally biased toward basic and acidic residues; the sequence is QEDKVEKKETE.

It belongs to the activator 1 small subunits family. RfcL subfamily. As to quaternary structure, heteromultimer composed of small subunits (RfcS) and large subunits (RfcL).

Functionally, part of the RFC clamp loader complex which loads the PCNA sliding clamp onto DNA. The polypeptide is Replication factor C large subunit (Methanococcoides burtonii (strain DSM 6242 / NBRC 107633 / OCM 468 / ACE-M)).